Reading from the N-terminus, the 271-residue chain is MPELPEVEVTRQGISPHLLDQQVTGLTVRNASLRWPVPEVAQQIVGQTIRGIRRRAKYLLLDTDAGTTIVHLGMSGSLRILPKSTPVEKHDHIDLELASGKVLRFNDPRRFGAWLWCELPEAAHPLLAKLGPEPLQSGFNVDYLAKALEGKKKAVKLCLMDNHIVVGVGNIYANEALFAAGIHPQTEAGRIDRERLTVLVAEVKQILAQAIKQGGTTLKDFTNADGKPGYFAQKLHVYGRGGETCTQCGNLLSEIKLGQRATVFCGLCQPR.

The active-site Schiff-base intermediate with DNA is Pro2. Glu3 acts as the Proton donor in catalysis. The Proton donor; for beta-elimination activity role is filled by Lys57. DNA-binding residues include His90, Arg109, and Lys151. An FPG-type zinc finger spans residues His236 to Pro270. The active-site Proton donor; for delta-elimination activity is the Arg260.

Belongs to the FPG family. In terms of assembly, monomer. Requires Zn(2+) as cofactor.

The catalysed reaction is Hydrolysis of DNA containing ring-opened 7-methylguanine residues, releasing 2,6-diamino-4-hydroxy-5-(N-methyl)formamidopyrimidine.. It carries out the reaction 2'-deoxyribonucleotide-(2'-deoxyribose 5'-phosphate)-2'-deoxyribonucleotide-DNA = a 3'-end 2'-deoxyribonucleotide-(2,3-dehydro-2,3-deoxyribose 5'-phosphate)-DNA + a 5'-end 5'-phospho-2'-deoxyribonucleoside-DNA + H(+). Its function is as follows. Involved in base excision repair of DNA damaged by oxidation or by mutagenic agents. Acts as a DNA glycosylase that recognizes and removes damaged bases. Has a preference for oxidized purines, such as 7,8-dihydro-8-oxoguanine (8-oxoG). Has AP (apurinic/apyrimidinic) lyase activity and introduces nicks in the DNA strand. Cleaves the DNA backbone by beta-delta elimination to generate a single-strand break at the site of the removed base with both 3'- and 5'-phosphates. The sequence is that of Formamidopyrimidine-DNA glycosylase from Shewanella loihica (strain ATCC BAA-1088 / PV-4).